We begin with the raw amino-acid sequence, 383 residues long: MHC class I polypeptide-related sequence A (383 aa).

A signal peptide spans 1 to 23 (MGLGPVFLLLAGIFPFAPPGAAA). The Extracellular segment spans residues 24–307 (EPHSLRYNLT…GKVLVLQSHW (284 aa)). N-linked (GlcNAc...) asparagine glycosylation is present at N31. C59 and C64 are disulfide-bonded. An N-linked (GlcNAc...) asparagine glycan is attached at N79. A disulfide bond links C119 and C187. An Ig-like C1-type domain is found at 207–296 (PMVNVTRSEA…SGNHSTHPVP (90 aa)). 3 N-linked (GlcNAc...) asparagine glycosylation sites follow: N210, N220, and N261. C225 and C282 are oxidised to a cystine. Residues 308–328 (QTFHVSAVAAAAIFVIIIFYV) form a helical membrane-spanning segment. Topologically, residues 329–383 (RCCKKKTSAAEGPELVSLQVLDQHPVGTSDHRDATQLGFQPLMSDLGSTGSTEGA) are cytoplasmic. S-palmitoyl cysteine attachment occurs at residues C330 and C331.

It belongs to the MHC class I family. MIC subfamily. In terms of assembly, unlike classical MHC class I molecules, does not form a heterodimer with beta-2-microglobulin. Binds as a monomer to a KLRK1/NKG2D homodimer. KLRK1 forms a complex with HCST/DAP10 in which KLRK1 binds MICA while HCST acts as an adapter molecule which enables signal transduction. Interacts with PDIA6 on the surface of tumor cells, leading to disulfide bond reduction which is required for release of MICA from tumor cells. As to quaternary structure, (Microbial infection) Interacts with human cytomegalovirus/HHV-5 protein UL142. In terms of processing, N-glycosylated. Glycosylation is not essential for interaction with KLRK1/NKG2D but enhances complex formation. Proteolytically cleaved and released from the cell surface of tumor cells which impairs KLRK1/NKG2D expression and T-cell activation. Post-translationally, palmitoylated on cysteine residues in the cytoplasmic tail leading to its association with membrane microdomains enriched in cholesterol. In terms of processing, N-glycosylation is necessary for cell surface expression. (Microbial infection) Ubiquitinated by human herpesvirus 8 protein K5, leading to degradation. As to expression, widely expressed with the exception of the central nervous system where it is absent. Expressed predominantly in gastric epithelium and also in monocytes, keratinocytes, endothelial cells, fibroblasts and in the outer layer of Hassal's corpuscles within the medulla of normal thymus. In skin, expressed mainly in the keratin layers, basal cells, ducts and follicles. Also expressed in many, but not all, epithelial tumors of lung, breast, kidney, ovary, prostate and colon. In thyomas, overexpressed in cortical and medullar epithelial cells. Tumors expressing MICA display increased levels of gamma delta T-cells.

The protein resides in the cell membrane. The protein localises to the cytoplasm. Functionally, widely expressed membrane-bound protein which acts as a ligand to stimulate an activating receptor KLRK1/NKG2D, expressed on the surface of essentially all human natural killer (NK), gammadelta T and CD8 alphabeta T-cells. Up-regulated in stressed conditions, such as viral and bacterial infections or DNA damage response, serves as signal of cellular stress, and engagement of KLRK1/NKG2D by MICA triggers NK-cells resulting in a range of immune effector functions, such as cytotoxicity and cytokine production. This chain is MHC class I polypeptide-related sequence A, found in Homo sapiens (Human).